The primary structure comprises 101 residues: Citrate lyase acyl carrier protein (101 aa).

O-(phosphoribosyl dephospho-coenzyme A)serine is present on serine 14.

It belongs to the CitD family. In terms of assembly, oligomer with a subunit composition of (alpha,beta,gamma)6.

It is found in the cytoplasm. In terms of biological role, covalent carrier of the coenzyme of citrate lyase. The sequence is that of Citrate lyase acyl carrier protein from Lacticaseibacillus casei (strain BL23) (Lactobacillus casei).